Reading from the N-terminus, the 410-residue chain is Tegument protein VP16 homolog (410 aa).

The segment at 388–410 is disordered; that stretch reads PPSPSEILPGDPPRPPTCGFLTR.

This sequence belongs to the herpesviridae tegument protein VP16 protein family. Associates with the VP16-induced complex; binding to host HCFC1 activates VP16 for association with the octamer motif-binding host protein POU2F1, to form a multiprotein-DNA complex responsible for activating transcription of the viral immediate early genes.

It localises to the virion tegument. The protein localises to the host nucleus. In terms of biological role, transcriptional activator of immediate-early (IE) gene products (alpha genes). Acts as a key activator of lytic infection by initiating the lytic program through the assembly of the transcriptional regulatory VP16-induced complex composed of VP16 and two cellular factors, HCFC1 and POU2F1. VP16-induced complex represents a regulatory switch: when it is on, it promotes IE-gene expression and thus lytic infection, and when it is off, it limits IE-gene transcription favoring latent infection. Its function is as follows. May play a role in the aggregation of tegument proteins around nucleocapsids during virus morphogenesis. This is Tegument protein VP16 homolog from Varicella-zoster virus (strain Dumas) (HHV-3).